The sequence spans 258 residues: Malonyl-[acyl-carrier protein] O-methyltransferase (258 aa).

This sequence belongs to the methyltransferase superfamily.

The enzyme catalyses malonyl-[ACP] + S-adenosyl-L-methionine = malonyl-[ACP] methyl ester + S-adenosyl-L-homocysteine. It participates in cofactor biosynthesis; biotin biosynthesis. In terms of biological role, converts the free carboxyl group of a malonyl-thioester to its methyl ester by transfer of a methyl group from S-adenosyl-L-methionine (SAM). It allows to synthesize pimeloyl-ACP via the fatty acid synthetic pathway. This Hamiltonella defensa subsp. Acyrthosiphon pisum (strain 5AT) protein is Malonyl-[acyl-carrier protein] O-methyltransferase.